The primary structure comprises 218 residues: Cytochrome b6 (218 aa).

Residues 35–55 (IFYCLGGITLVCFLIQFATGF) traverse the membrane as a helical segment. Residue Cys38 participates in heme c binding. Residues His89 and His103 each coordinate heme b. 3 helical membrane-spanning segments follow: residues 93 to 113 (ASMM…TGGF), 119 to 139 (LTWV…VTGY), and 189 to 209 (LHTF…FLMI). Residues His190 and His205 each contribute to the heme b site.

The protein belongs to the cytochrome b family. PetB subfamily. The 4 large subunits of the cytochrome b6-f complex are cytochrome b6, subunit IV (17 kDa polypeptide, PetD), cytochrome f and the Rieske protein, while the 4 small subunits are PetG, PetL, PetM and PetN. The complex functions as a dimer. The cofactor is heme b. It depends on heme c as a cofactor.

It localises to the cellular thylakoid membrane. Component of the cytochrome b6-f complex, which mediates electron transfer between photosystem II (PSII) and photosystem I (PSI), cyclic electron flow around PSI, and state transitions. The protein is Cytochrome b6 of Parasynechococcus marenigrum (strain WH8102).